Here is a 120-residue protein sequence, read N- to C-terminus: Large ribosomal subunit protein uL18 (120 aa).

It belongs to the universal ribosomal protein uL18 family. As to quaternary structure, part of the 50S ribosomal subunit; part of the 5S rRNA/L5/L18/L25 subcomplex. Contacts the 5S and 23S rRNAs.

Functionally, this is one of the proteins that bind and probably mediate the attachment of the 5S RNA into the large ribosomal subunit, where it forms part of the central protuberance. The sequence is that of Large ribosomal subunit protein uL18 from Trichodesmium erythraeum (strain IMS101).